A 234-amino-acid chain; its full sequence is O-antigen biosynthesis glycosyltransferase WbnI (234 aa).

Substrate-binding positions include I8–Y13, N93–V95, and H115–Y118. The active-site Nucleophile is E185.

This sequence belongs to the glycosyltransferase 6 family. The cofactor is Mn(2+).

It catalyses the reaction alpha-L-Fuc-(1-&gt;2)-beta-D-Gal-(1-&gt;3)-alpha-D-GalNAc-(1-&gt;3)-alpha-D-GalNAc-di-trans,octa-cis-undecaprenyl diphosphate + UDP-alpha-D-galactose = alpha-L-Fuc-(1-&gt;2)-[alpha-D-Gal-(1-&gt;3)]-beta-D-Gal-(1-&gt;3)-alpha-D-GalNAc-(1-&gt;3)-alpha-D-GalNAc-di-trans,octa-cis-undecaprenyl diphosphate + UDP + H(+). The protein operates within bacterial outer membrane biogenesis; LPS O-antigen biosynthesis. Involved in the assembly of the O-repeating unit during O-antigen biosynthesis. In Escherichia coli, this protein is O-antigen biosynthesis glycosyltransferase WbnI.